A 68-amino-acid polypeptide reads, in one-letter code: Molybdenum-pterin-binding protein 3 (68 aa).

Residues 2–68 enclose the Mop domain; the sequence is SISARNQLKG…IKSTDVMILA (67 aa).

Functionally, binds one mole of molybdenum per mole of protein and contains a pterin. This Clostridium pasteurianum protein is Molybdenum-pterin-binding protein 3 (mopIII).